The chain runs to 656 residues: Probable Xaa-Pro aminopeptidase P (656 aa).

Mn(2+) is bound by residues D453, D464, E562, and E576.

The protein belongs to the peptidase M24B family. Mn(2+) is required as a cofactor.

The enzyme catalyses Release of any N-terminal amino acid, including proline, that is linked to proline, even from a dipeptide or tripeptide.. Functionally, catalyzes the removal of a penultimate prolyl residue from the N-termini of peptides. This is Probable Xaa-Pro aminopeptidase P (ampp) from Pyrenophora teres f. teres (strain 0-1) (Barley net blotch fungus).